The chain runs to 60 residues: L-amino-acid oxidase (60 aa).

An FAD-binding site is contributed by 1-4; it reads GPMR. Arginine 4 contributes to the substrate binding site.

It belongs to the flavin monoamine oxidase family. FIG1 subfamily. In terms of assembly, homodimer; non-covalently linked. FAD serves as cofactor. In terms of processing, contains 2 disulfide bonds. Post-translationally, N-glycosylated. Expressed by the venom gland.

The protein localises to the secreted. It catalyses the reaction an L-alpha-amino acid + O2 + H2O = a 2-oxocarboxylate + H2O2 + NH4(+). Catalyzes an oxidative deamination of predominantly hydrophobic and aromatic L-amino acids, thus producing hydrogen peroxide that may contribute to the diverse toxic effects of this enzyme. Exhibits diverse biological activities, such as hemorrhage, hemolysis, edema, apoptosis of vascular endothelial cells or tumor cell lines, antibacterial and antiparasitic activities, as well as regulation of platelet aggregation. Effects of snake L-amino oxidases on platelets are controversial, since they either induce aggregation or inhibit agonist-induced aggregation. These different effects are probably due to different experimental conditions. The polypeptide is L-amino-acid oxidase (Bitis gabonica (Gaboon adder)).